The sequence spans 240 residues: DISARM protein DrmC (240 aa).

Residues 174–201 (GYSSLHAKVIMVDEEKAFVSSANLSYNG) form the PLD phosphodiesterase domain. Catalysis depends on residues H179, K181, and D186.

It belongs to the phospholipase D family.

The protein resides in the cytoplasm. Its function is as follows. Component of antiviral defense system DISARM (defense island system associated with restriction-modification), composed of DrmE, DrmA, DrmB, DrmC and DrmMII. DISARM is probably a multi-gene restriction module, this subunit is probably a phospholipase or nuclease. Expression of DISARM in B.subtilis (strain BEST7003) confers resistance to phages Nf, phi29, phi105, phi3T, SPO1, SPR and SPP1. Protection is over 10(7)-fold against phi3T, 10(4)-10(5)-fold against Nf, phi29, phi105 and SPR, 100-fold against SPO1 and 10-fold against SPP1. DISARM does not interfere with phage adsorption, but instead interferes with (phi3T) DNA replication early in its cycle, preventing replication, circularization and lysogeny and probably causes phage DNA degradation (DNA is degraded in SPP1-infected cells). The protein is DISARM protein DrmC of Bacillus paralicheniformis (strain ATCC 9945a / NCIMB 11709 / CD-2).